The primary structure comprises 415 residues: G-protein coupled receptor daf-38 (415 aa).

Residues 1-19 (MLLPSNLTTSTLMTSSSES) are compositionally biased toward low complexity. The tract at residues 1–25 (MLLPSNLTTSTLMTSSSESYDADNP) is disordered. Residues 1 to 35 (MLLPSNLTTSTLMTSSSESYDADNPGLPPEPILSD) are Extracellular-facing. Residues 36 to 56 (YVEMFTLVLNFIVGAPLNLAA) traverse the membrane as a helical segment. Over 57–75 (YTQLSERPTSTRLDLLKRS) the chain is Cytoplasmic. Residues 76–96 (LNYSDLLVLFIYVPSRACWLL) traverse the membrane as a helical segment. At 97–108 (TYDWRGGDALCK) the chain is on the extracellular side. An intrachain disulfide couples C107 to C187. Residues 109–129 (IVKMFHTFAFQSSSNVIVCIA) traverse the membrane as a helical segment. Over 130–152 (VDRLLSVLSPSHHSPNKALKRTK) the chain is Cytoplasmic. A helical transmembrane segment spans residues 153–173 (MMLIVAWIVALVISCPQLFIW). Residues 174-222 (KAYLALPEYNWSQCLQIWEIARMEKFNKPQVVPEFDAEFWYSILHISLV) are Extracellular-facing. Residues 223 to 243 (FWIPCIIIMLSYIIVISWVWI) form a helical membrane-spanning segment. Topologically, residues 244 to 345 (NSRPSIRHTS…NLNRSRALRV (102 aa)) are cytoplasmic. A helical transmembrane segment spans residues 346 to 366 (SLLLVVAYIICWLPYNLISLI). Topologically, residues 367–382 (QFLDRDFFSSYLKHVH) are extracellular. The chain crosses the membrane as a helical span at residues 383 to 403 (FCQQLIIFNSVVNPWLYGFFG). At 404–415 (PRRPSTTGAGRH) the chain is on the cytoplasmic side.

The protein belongs to the G-protein coupled receptor 1 family. As to quaternary structure, heterodimer; with daf-37. As to expression, expressed in the ASI and ASK chemosensory neurons and in the IL-2 interneurons, but weakly expressed in other head neurons in hermaphrodites.

It is found in the cell membrane. In terms of biological role, G-protein coupled receptor (GPCR) that forms a heterodimer with daf-37 to control dauer formation and behavior. Required for the response to dauer inducing pheromones such as the ascarosides ascr#2, ascr#3 and ascr#5. This is G-protein coupled receptor daf-38 from Caenorhabditis elegans.